Reading from the N-terminus, the 219-residue chain is 2-hydroxy-3-keto-5-methylthiopentenyl-1-phosphate phosphatase (219 aa).

The protein belongs to the HAD-like hydrolase superfamily. MtnX family.

It catalyses the reaction 2-hydroxy-5-methylsulfanyl-3-oxopent-1-enyl phosphate + H2O = 1,2-dihydroxy-5-(methylsulfanyl)pent-1-en-3-one + phosphate. The protein operates within amino-acid biosynthesis; L-methionine biosynthesis via salvage pathway; L-methionine from S-methyl-5-thio-alpha-D-ribose 1-phosphate: step 4/6. In terms of biological role, dephosphorylates 2-hydroxy-3-keto-5-methylthiopentenyl-1-phosphate (HK-MTPenyl-1-P) yielding 1,2-dihydroxy-3-keto-5-methylthiopentene (DHK-MTPene). The chain is 2-hydroxy-3-keto-5-methylthiopentenyl-1-phosphate phosphatase from Bacillus cereus (strain AH187).